Reading from the N-terminus, the 238-residue chain is tRNA (guanine-N(7)-)-methyltransferase (238 aa).

The S-adenosyl-L-methionine site is built by E68, E93, D120, and D143. D143 is a catalytic residue. Substrate is bound by residues K147, D179, and 216–219; that span reads TKFE.

It belongs to the class I-like SAM-binding methyltransferase superfamily. TrmB family.

The catalysed reaction is guanosine(46) in tRNA + S-adenosyl-L-methionine = N(7)-methylguanosine(46) in tRNA + S-adenosyl-L-homocysteine. It participates in tRNA modification; N(7)-methylguanine-tRNA biosynthesis. In terms of biological role, catalyzes the formation of N(7)-methylguanine at position 46 (m7G46) in tRNA. In Ectopseudomonas mendocina (strain ymp) (Pseudomonas mendocina), this protein is tRNA (guanine-N(7)-)-methyltransferase.